Here is a 498-residue protein sequence, read N- to C-terminus: Acetyl-coenzyme A carboxylase carboxyl transferase subunit beta, chloroplastic (498 aa).

The tract at residues Ser36–Ser59 is disordered. One can recognise a CoA carboxyltransferase N-terminal domain in the interval Leu231–Lys498. The Zn(2+) site is built by Cys235, Cys238, Cys254, and Cys257. A C4-type zinc finger spans residues Cys235–Cys257.

This sequence belongs to the AccD/PCCB family. In terms of assembly, acetyl-CoA carboxylase is a heterohexamer composed of biotin carboxyl carrier protein, biotin carboxylase and 2 subunits each of ACCase subunit alpha and ACCase plastid-coded subunit beta (accD). The cofactor is Zn(2+).

The protein resides in the plastid. It is found in the chloroplast stroma. The enzyme catalyses N(6)-carboxybiotinyl-L-lysyl-[protein] + acetyl-CoA = N(6)-biotinyl-L-lysyl-[protein] + malonyl-CoA. It participates in lipid metabolism; malonyl-CoA biosynthesis; malonyl-CoA from acetyl-CoA: step 1/1. Component of the acetyl coenzyme A carboxylase (ACC) complex. Biotin carboxylase (BC) catalyzes the carboxylation of biotin on its carrier protein (BCCP) and then the CO(2) group is transferred by the transcarboxylase to acetyl-CoA to form malonyl-CoA. The polypeptide is Acetyl-coenzyme A carboxylase carboxyl transferase subunit beta, chloroplastic (Morus indica (Mulberry)).